A 3124-amino-acid polypeptide reads, in one-letter code: Collagen alpha-1(XII) chain (3124 aa).

An N-terminal signal peptide occupies residues methionine 1–alanine 23. Positions proline 27–proline 117 constitute a Fibronectin type-III 1 domain. Asparagine 32 is a glycosylation site (N-linked (GlcNAc...) asparagine). A VWFA 1 domain is found at aspartate 139–isoleucine 311. Residue serine 328 is glycosylated (O-linked (Xyl...) (chondroitin sulfate) serine). One can recognise a Fibronectin type-III 2 domain in the interval proline 335 to valine 424. A VWFA 2 domain is found at aspartate 439–valine 615. 6 consecutive Fibronectin type-III domains span residues proline 633–lysine 722, alanine 724–asparagine 815, proline 816–arginine 906, serine 908–serine 998, alanine 999–phenylalanine 1087, and proline 1089–aspartate 1179. Residues serine 797, serine 890, and serine 981 are each glycosylated (O-linked (Xyl...) (chondroitin sulfate) serine). Asparagine 1006, asparagine 1032, and asparagine 1044 each carry an N-linked (GlcNAc...) asparagine glycan. The interval lysine 1075–methionine 1100 is disordered. In terms of domain architecture, VWFA 3 spans aspartate 1199 to valine 1371. Fibronectin type-III domains lie at proline 1387 to serine 1476, serine 1477 to proline 1568, glycine 1569 to proline 1659, valine 1660 to proline 1756, glycine 1759 to asparagine 1853, methionine 1854 to glycine 1939, threonine 1940 to serine 2030, glycine 2031 to leucine 2121, proline 2122 to asparagine 2210, and valine 2211 to threonine 2299. Residue asparagine 1512 is glycosylated (N-linked (GlcNAc...) asparagine). Asparagine 1767 is a glycosylation site (N-linked (GlcNAc...) asparagine). N-linked (GlcNAc...) asparagine glycans are attached at residues asparagine 2210 and asparagine 2273. The VWFA 4 domain maps to aspartate 2327–leucine 2500. Residues serine 2455–valine 2750 are nonhelical region (NC3). Positions glycine 2524–proline 2716 constitute a Laminin G-like domain. Residues asparagine 2532 and asparagine 2683 are each glycosylated (N-linked (GlcNAc...) asparagine). Disordered stretches follow at residues serine 2749–glycine 2900 and proline 2935–proline 3080. Collagen-like domains lie at glycine 2751–glycine 2802, glycine 2807–glycine 2858, and proline 2859–glycine 2900. The segment at glycine 2751 to isoleucine 2902 is triple-helical region (COL2) with 1 imperfection. 2 stretches are compositionally biased toward pro residues: residues proline 2752–glycine 2761 and proline 2788–glutamine 2798. Over residues proline 2821–proline 2830 the composition is skewed to low complexity. Over residues leucine 2832–proline 2841 the composition is skewed to pro residues. Composition is skewed to low complexity over residues proline 2842–threonine 2854 and alanine 2865–proline 2878. The Cell attachment site motif lies at arginine 2899–aspartate 2901. The tract at residues alanine 2903–proline 2945 is nonhelical region (NC2). Residues proline 2935 to glutamine 2944 are compositionally biased toward polar residues. The segment covering proline 2945–proline 2954 has biased composition (pro residues). Positions proline 2945–glycine 2994 constitute a Collagen-like 4 domain. A triple-helical region (COL1) with 2 imperfections region spans residues glycine 2946 to cysteine 3048. Positions glycine 2961 to glycine 2970 are enriched in gly residues. A compositionally biased stretch (low complexity) spans glutamine 3010–arginine 3024. A nonhelical region (NC1) region spans residues aspartate 3049–proline 3124.

Belongs to the fibril-associated collagens with interrupted helices (FACIT) family. As to quaternary structure, trimer of identical chains each containing 190 kDa of non-triple-helical sequences. Post-translationally, the triple-helical tail is stabilized by disulfide bonds at each end. In terms of processing, prolines at the third position of the tripeptide repeating unit (G-X-Y) are hydroxylated in some or all of the chains. O-glycosylated; glycosaminoglycan of chondroitin-sulfate type. In terms of tissue distribution, type XII collagen is present in tendons, ligaments, perichondrium, and periosteum, all dense connective tissues containing type I collagen.

The protein resides in the secreted. The protein localises to the extracellular space. It localises to the extracellular matrix. Its function is as follows. Type XII collagen interacts with type I collagen-containing fibrils, the COL1 domain could be associated with the surface of the fibrils, and the COL2 and NC3 domains may be localized in the perifibrillar matrix. The chain is Collagen alpha-1(XII) chain (COL12A1) from Gallus gallus (Chicken).